Here is a 429-residue protein sequence, read N- to C-terminus: UDP-N-acetylglucosamine 1-carboxyvinyltransferase (429 aa).

Residue 22–23 (KN) participates in phosphoenolpyruvate binding. Arg102 contributes to the UDP-N-acetyl-alpha-D-glucosamine binding site. Cys126 serves as the catalytic Proton donor. Cys126 bears the 2-(S-cysteinyl)pyruvic acid O-phosphothioketal mark. UDP-N-acetyl-alpha-D-glucosamine-binding positions include 131 to 135 (RPVDL), Asp316, and Ile338.

The protein belongs to the EPSP synthase family. MurA subfamily.

The protein resides in the cytoplasm. The catalysed reaction is phosphoenolpyruvate + UDP-N-acetyl-alpha-D-glucosamine = UDP-N-acetyl-3-O-(1-carboxyvinyl)-alpha-D-glucosamine + phosphate. The protein operates within cell wall biogenesis; peptidoglycan biosynthesis. Functionally, cell wall formation. Adds enolpyruvyl to UDP-N-acetylglucosamine. The protein is UDP-N-acetylglucosamine 1-carboxyvinyltransferase of Rhodopseudomonas palustris (strain BisB5).